Consider the following 361-residue polypeptide: tRNA-specific 2-thiouridylase MnmA (361 aa).

Residues 11 to 18 (GMSGGVDS) and M37 each bind ATP. C106 acts as the Nucleophile in catalysis. An intrachain disulfide couples C106 to C202. G130 serves as a coordination point for ATP. The segment at 152 to 154 (KDQ) is interaction with tRNA. The active-site Cysteine persulfide intermediate is the C202. The segment at 308–309 (RY) is interaction with tRNA.

Belongs to the MnmA/TRMU family.

Its subcellular location is the cytoplasm. It carries out the reaction S-sulfanyl-L-cysteinyl-[protein] + uridine(34) in tRNA + AH2 + ATP = 2-thiouridine(34) in tRNA + L-cysteinyl-[protein] + A + AMP + diphosphate + H(+). Functionally, catalyzes the 2-thiolation of uridine at the wobble position (U34) of tRNA, leading to the formation of s(2)U34. In Clostridium botulinum (strain Alaska E43 / Type E3), this protein is tRNA-specific 2-thiouridylase MnmA.